A 365-amino-acid chain; its full sequence is MFTDYVRILAKAGKGGNGCISFCREAFRPHGGPDGGDGGKGGDVILEVNPQLSDLSHFLFSPHQFAEDGQPGKGQKRKGRDGKNLKLEVPPGVVVYQLDPNRIFHSSRDLLPIPKPGEPLKKIGELIEPGMRFILCKGGKGGRGNFQFRSPINQSPRYCEEGEEGQSGQFLLELKTIADVGFVGLPNSGKSTLLRQVTDAKPKTAPYPFTTLKPHVGIVNFDDGYRMSCADIPGLIEGAHQGKGLGFYFLRHIERSHLLVYVLDLADPFLDPVQVFYTLRNELEKYNKELLKKPFLIVGNKVDLVAADSLNHKSLDFNKRTGLSFLPISALKAQGIELFLNSCRKSFESTKKLIPSSPKVLSPLT.

The Obg domain maps to 1–177; it reads MFTDYVRILA…GQFLLELKTI (177 aa). Residues 64–85 form a disordered region; sequence QFAEDGQPGKGQKRKGRDGKNL. One can recognise an OBG-type G domain in the interval 178–348; it reads ADVGFVGLPN…FLNSCRKSFE (171 aa). Residues 184 to 191, 209 to 213, 231 to 234, 300 to 303, and 329 to 331 contribute to the GTP site; these read GLPNSGKS, FTTLK, DIPG, NKVD, and SAL. Residues serine 191 and threonine 211 each contribute to the Mg(2+) site.

Belongs to the TRAFAC class OBG-HflX-like GTPase superfamily. OBG GTPase family. As to quaternary structure, monomer. Mg(2+) serves as cofactor.

It localises to the cytoplasm. In terms of biological role, an essential GTPase which binds GTP, GDP and possibly (p)ppGpp with moderate affinity, with high nucleotide exchange rates and a fairly low GTP hydrolysis rate. Plays a role in control of the cell cycle, stress response, ribosome biogenesis and in those bacteria that undergo differentiation, in morphogenesis control. The sequence is that of GTPase Obg from Methylacidiphilum infernorum (isolate V4) (Methylokorus infernorum (strain V4)).